A 304-amino-acid chain; its full sequence is Putative AraC-like transcription regulator (304 aa).

The 99-residue stretch at 202 to 300 (ATALTCLHRD…GMPPGDYRKH (99 aa)) folds into the HTH araC/xylS-type domain. 2 DNA-binding regions (H-T-H motif) span residues 219-240 (ADLA…KATV) and 267-290 (LASI…KRVL).

The protein is Putative AraC-like transcription regulator of Streptomyces lividans.